A 90-amino-acid polypeptide reads, in one-letter code: DNA-binding protein HU-alpha (90 aa).

It belongs to the bacterial histone-like protein family. Heterodimer of an alpha and a beta chain.

Histone-like DNA-binding protein which is capable of wrapping DNA to stabilize it, and thus to prevent its denaturation under extreme environmental conditions. This chain is DNA-binding protein HU-alpha (hupA), found in Serratia marcescens.